The following is a 212-amino-acid chain: COP9 signalosome complex subunit 8 (212 aa).

The region spanning 26–193 (TSLSAYEEQA…KPVVTAPPKD (168 aa)) is the PCI domain.

Belongs to the CSN8 family. In terms of assembly, component of the COP9 signalosome (CSN) complex.

The protein localises to the cytoplasm. The protein resides in the nucleus. Component of the COP9 signalosome (CSN) complex that acts as an regulator of the ubiquitin (Ubl) conjugation pathway by mediating the deneddylation of the cullin subunit of SCF-type E3 ubiquitin-protein ligase complexes. The CSN complex seems to link protein degradation to sexual development. This Emericella nidulans (strain FGSC A4 / ATCC 38163 / CBS 112.46 / NRRL 194 / M139) (Aspergillus nidulans) protein is COP9 signalosome complex subunit 8 (csnH).